The following is a 301-amino-acid chain: Probable alpha-L-glutamate ligase (301 aa).

In terms of domain architecture, ATP-grasp spans 104–287; that stretch reads LQLLSRRGIG…VAGMIIEHLE (184 aa). ATP-binding positions include K141, 178-179, D187, and 211-213; these read EY and RSN. D248, E260, and N262 together coordinate Mg(2+). Mn(2+) contacts are provided by D248, E260, and N262.

It belongs to the RimK family. It depends on Mg(2+) as a cofactor. Mn(2+) serves as cofactor.

This chain is Probable alpha-L-glutamate ligase, found in Pseudomonas putida (strain GB-1).